A 498-amino-acid polypeptide reads, in one-letter code: Pentatricopeptide repeat-containing protein At3g61360 (498 aa).

PPR repeat units follow at residues 102 to 132 (TSDS…VRKD), 138 to 172 (SFKS…IFRK), 175 to 205 (GVDE…LHSR), 209 to 243 (DVKT…GFKP), 244 to 278 (NSVT…DFDI), 279 to 313 (TVQI…GLTP), 314 to 348 (DCGA…GIEP), 349 to 385 (DSVT…SLVP), and 386 to 420 (KTPT…GYCP).

It belongs to the PPR family. P subfamily.

The polypeptide is Pentatricopeptide repeat-containing protein At3g61360 (Arabidopsis thaliana (Mouse-ear cress)).